Reading from the N-terminus, the 629-residue chain is tRNA uridine 5-carboxymethylaminomethyl modification enzyme MnmG (629 aa).

FAD is bound by residues 14 to 19, Val126, and Ser181; that span reads GAGHAG. 273 to 287 is a binding site for NAD(+); it reads GPRYCPSIEDKVVRF. FAD is bound at residue Gln370.

This sequence belongs to the MnmG family. In terms of assembly, homodimer. Heterotetramer of two MnmE and two MnmG subunits. FAD serves as cofactor.

The protein localises to the cytoplasm. Its function is as follows. NAD-binding protein involved in the addition of a carboxymethylaminomethyl (cmnm) group at the wobble position (U34) of certain tRNAs, forming tRNA-cmnm(5)s(2)U34. The polypeptide is tRNA uridine 5-carboxymethylaminomethyl modification enzyme MnmG (Bacillus thuringiensis (strain Al Hakam)).